Consider the following 187-residue polypeptide: Small ribosomal subunit protein uS10m (187 aa).

Belongs to the universal ribosomal protein uS10 family. As to quaternary structure, component of the mitochondrial ribosome small subunit (28S) which comprises a 12S rRNA and about 30 distinct proteins.

The protein localises to the mitochondrion. The sequence is that of Small ribosomal subunit protein uS10m (mrps10) from Danio rerio (Zebrafish).